A 282-amino-acid chain; its full sequence is Parvulin-like PPIase (282 aa).

Positions 1–20 (MKKLSVIFLSVSMLSGIAFA) are cleaved as a signal peptide. Positions 138–231 (KEQIKVAHIL…FGWHIIKVLE (94 aa)) constitute a PpiC domain.

Belongs to the PpiC/parvulin rotamase family.

It is found in the cell outer membrane. It carries out the reaction [protein]-peptidylproline (omega=180) = [protein]-peptidylproline (omega=0). The protein is Parvulin-like PPIase (plp) of Rickettsia felis (strain ATCC VR-1525 / URRWXCal2) (Rickettsia azadi).